Reading from the N-terminus, the 434-residue chain is Beta-enolase (434 aa).

Alanine 2 is modified (N-acetylalanine). Threonine 72 carries the phosphothreonine modification. 2 positions are modified to phosphoserine: serine 83 and serine 157. The substrate site is built by histidine 158 and glutamate 167. Serine 176 bears the Phosphoserine mark. Threonine 205 bears the Phosphothreonine mark. Glutamate 210 acts as the Proton donor in catalysis. Threonine 229 carries the post-translational modification Phosphothreonine. At tyrosine 236 the chain carries Phosphotyrosine. Aspartate 245 is a Mg(2+) binding site. Serine 263 bears the Phosphoserine mark. Residues glutamate 293 and aspartate 318 each coordinate substrate. The Mg(2+) site is built by glutamate 293 and aspartate 318. The active-site Proton acceptor is the lysine 343. Residues 370–373 and lysine 394 contribute to the substrate site; that span reads SHRS.

Belongs to the enolase family. As to quaternary structure, mammalian enolase is composed of 3 isozyme subunits, alpha, beta and gamma, which can form homodimers or heterodimers which are cell-type and development-specific. Interacts with PNKD. Mg(2+) serves as cofactor. As to expression, the alpha/alpha homodimer is expressed in embryo and in most adult tissues. The alpha/beta heterodimer and the beta/beta homodimer are found in striated muscle, and the alpha/gamma heterodimer and the gamma/gamma homodimer in neurons.

The protein localises to the cytoplasm. It carries out the reaction (2R)-2-phosphoglycerate = phosphoenolpyruvate + H2O. Its pathway is carbohydrate degradation; glycolysis; pyruvate from D-glyceraldehyde 3-phosphate: step 4/5. Its function is as follows. Glycolytic enzyme that catalyzes the conversion of 2-phosphoglycerate to phosphoenolpyruvate. Appears to have a function in striated muscle development and regeneration. This chain is Beta-enolase (ENO3), found in Homo sapiens (Human).